The chain runs to 480 residues: MGKTEPEQTGIVTSIRGSVVDMRFDELLPSIYSVVKTGREMEVTVEILMQLDRRHVRGIALTPTEGLCRGMKARNTGSPLKAPVGKGTLSRMFDVFGNAIDRRGPVTNVTWRSVHGAPPQLSRRSTKSEVFETGIKIIDLLVPLERGGKAGLFGGAGVGKTVLLTEMIHNMVSKESGVSIFCGIGERCREGEELYRDMSEAGVLDNMVMVFGQMNEPPGSRFRVGLTALTMAEYFRDDLHQEVLLLIDNIFRFIQAGSEISGMIGQMPSRLGYQPTIGTELSALEERIANTGTGAITSIQAVYVPADDFTDPAAVHTFSHLSASLVLSRKRAGEGFYPAVDPLSSGSKMAGESIVGRRHYDLAREVRRVLAQYAELKDIIAMLGLEQLSAEDRRLVGRARRLERFFTQPFFTTEQFSGLAGKSVPIANTIDGCERILRDEFENYPERALYMIGSIAEAQEKTVIETTMSESVAAKPEGGN.

Residue 154–161 (GGAGVGKT) coordinates ATP.

Belongs to the ATPase alpha/beta chains family. In terms of assembly, F-type ATPases have 2 components, CF(1) - the catalytic core - and CF(0) - the membrane proton channel. CF(1) has five subunits: alpha(3), beta(3), gamma(1), delta(1), epsilon(1). CF(0) has four main subunits: a(1), b(1), b'(1) and c(9-12).

Its subcellular location is the cell inner membrane. The enzyme catalyses ATP + H2O + 4 H(+)(in) = ADP + phosphate + 5 H(+)(out). Produces ATP from ADP in the presence of a proton gradient across the membrane. The catalytic sites are hosted primarily by the beta subunits. In Chlorobaculum tepidum (strain ATCC 49652 / DSM 12025 / NBRC 103806 / TLS) (Chlorobium tepidum), this protein is ATP synthase subunit beta 1.